The chain runs to 116 residues: NADH-ubiquinone oxidoreductase chain 3 (116 aa).

Transmembrane regions (helical) follow at residues 3 to 23, 56 to 76, and 87 to 107; these read LITT…TISF, FFLI…LLPL, and LTLI…IYEW.

This sequence belongs to the complex I subunit 3 family.

Its subcellular location is the mitochondrion membrane. The enzyme catalyses a ubiquinone + NADH + 5 H(+)(in) = a ubiquinol + NAD(+) + 4 H(+)(out). Functionally, core subunit of the mitochondrial membrane respiratory chain NADH dehydrogenase (Complex I) that is believed to belong to the minimal assembly required for catalysis. Complex I functions in the transfer of electrons from NADH to the respiratory chain. The immediate electron acceptor for the enzyme is believed to be ubiquinone. In Oncorhynchus mykiss (Rainbow trout), this protein is NADH-ubiquinone oxidoreductase chain 3 (MT-ND3).